A 356-amino-acid polypeptide reads, in one-letter code: L-amino acid-D/L-Glu epimerase (356 aa).

Substrate is bound by residues arginine 25, serine 136, and 161–163 (KVK). Aspartate 191 contributes to the Mg(2+) binding site. Residue asparagine 193 coordinates substrate. Glutamate 219 and aspartate 244 together coordinate Mg(2+). Residues lysine 268, 296 to 298 (CMM), and 320 to 322 (DLD) contribute to the substrate site.

It belongs to the mandelate racemase/muconate lactonizing enzyme family. It depends on Mg(2+) as a cofactor.

In terms of biological role, catalyzes the epimerization of dipeptides with L-Glu in the second position. Has epimerase activity with L-Ala-L-Glu, L-Pro-L-Glu, L-Val-L-Glu, L-Thr-L-Glu and L-Met-L-Glu (in vitro). The polypeptide is L-amino acid-D/L-Glu epimerase (Francisella philomiragia subsp. philomiragia (strain ATCC 25017 / CCUG 19701 / FSC 153 / O#319-036)).